A 340-amino-acid chain; its full sequence is Phosphate acyltransferase (340 aa).

This sequence belongs to the PlsX family. Homodimer. Probably interacts with PlsY.

It is found in the cytoplasm. The catalysed reaction is a fatty acyl-[ACP] + phosphate = an acyl phosphate + holo-[ACP]. Its pathway is lipid metabolism; phospholipid metabolism. Functionally, catalyzes the reversible formation of acyl-phosphate (acyl-PO(4)) from acyl-[acyl-carrier-protein] (acyl-ACP). This enzyme utilizes acyl-ACP as fatty acyl donor, but not acyl-CoA. This Pseudomonas syringae pv. syringae (strain B728a) protein is Phosphate acyltransferase.